Consider the following 129-residue polypeptide: uncharacterized protein (129 aa).

3 consecutive transmembrane segments (helical) span residues 15 to 35 (IFIIIVDNEAFLHFSCLIFVF), 48 to 68 (IFSFFFLTRRFSFIVVIYYFF), and 107 to 127 (INIFLPPFALTVVQFLVNLVC).

Its subcellular location is the membrane. This is an uncharacterized protein from Saccharomyces cerevisiae (strain ATCC 204508 / S288c) (Baker's yeast).